Consider the following 379-residue polypeptide: Alanine racemase (379 aa).

K37 functions as the Proton acceptor; specific for D-alanine in the catalytic mechanism. K37 carries the post-translational modification N6-(pyridoxal phosphate)lysine. A substrate-binding site is contributed by R137. Y269 acts as the Proton acceptor; specific for L-alanine in catalysis. Residue M317 coordinates substrate.

It belongs to the alanine racemase family. Pyridoxal 5'-phosphate serves as cofactor.

The enzyme catalyses L-alanine = D-alanine. It functions in the pathway amino-acid biosynthesis; D-alanine biosynthesis; D-alanine from L-alanine: step 1/1. In terms of biological role, catalyzes the interconversion of L-alanine and D-alanine. May also act on other amino acids. In Citrifermentans bemidjiense (strain ATCC BAA-1014 / DSM 16622 / JCM 12645 / Bem) (Geobacter bemidjiensis), this protein is Alanine racemase (alr).